The sequence spans 720 residues: Methionine--tRNA ligase (720 aa).

Residues P27–H37 carry the 'HIGH' region motif. Positions 158, 161, 171, and 174 each coordinate Zn(2+). The short motif at K348–S352 is the 'KMSKS' region element. K351 provides a ligand contact to ATP. Residues D614–K720 form the tRNA-binding domain.

It belongs to the class-I aminoacyl-tRNA synthetase family. MetG type 1 subfamily. As to quaternary structure, homodimer. It depends on Zn(2+) as a cofactor.

It localises to the cytoplasm. It catalyses the reaction tRNA(Met) + L-methionine + ATP = L-methionyl-tRNA(Met) + AMP + diphosphate. In terms of biological role, is required not only for elongation of protein synthesis but also for the initiation of all mRNA translation through initiator tRNA(fMet) aminoacylation. The chain is Methionine--tRNA ligase from Burkholderia ambifaria (strain MC40-6).